Here is a 319-residue protein sequence, read N- to C-terminus: Aspartate carbamoyltransferase catalytic subunit (319 aa).

The carbamoyl phosphate site is built by arginine 57 and threonine 58. L-aspartate is bound at residue lysine 85. The carbamoyl phosphate site is built by arginine 107, histidine 135, and glutamine 138. The L-aspartate site is built by arginine 168 and arginine 222. Glycine 263 and proline 264 together coordinate carbamoyl phosphate.

This sequence belongs to the aspartate/ornithine carbamoyltransferase superfamily. ATCase family. Heterododecamer (2C3:3R2) of six catalytic PyrB chains organized as two trimers (C3), and six regulatory PyrI chains organized as three dimers (R2).

It catalyses the reaction carbamoyl phosphate + L-aspartate = N-carbamoyl-L-aspartate + phosphate + H(+). It functions in the pathway pyrimidine metabolism; UMP biosynthesis via de novo pathway; (S)-dihydroorotate from bicarbonate: step 2/3. Functionally, catalyzes the condensation of carbamoyl phosphate and aspartate to form carbamoyl aspartate and inorganic phosphate, the committed step in the de novo pyrimidine nucleotide biosynthesis pathway. The chain is Aspartate carbamoyltransferase catalytic subunit from Paracoccus denitrificans (strain Pd 1222).